Reading from the N-terminus, the 320-residue chain is Cytochrome f (320 aa).

The first 35 residues, 1–35 (MQTRNTLSWIKEEITRSISVSLMIYIITWASISNA), serve as a signal peptide directing secretion. Heme contacts are provided by Tyr-36, Cys-56, Cys-59, and His-60. A helical transmembrane segment spans residues 286 to 306 (VQGLLFFLASVVLAQIFLVLK).

The protein belongs to the cytochrome f family. In terms of assembly, the 4 large subunits of the cytochrome b6-f complex are cytochrome b6, subunit IV (17 kDa polypeptide, petD), cytochrome f and the Rieske protein, while the 4 small subunits are PetG, PetL, PetM and PetN. The complex functions as a dimer. It depends on heme as a cofactor.

Its subcellular location is the plastid. The protein localises to the chloroplast thylakoid membrane. Component of the cytochrome b6-f complex, which mediates electron transfer between photosystem II (PSII) and photosystem I (PSI), cyclic electron flow around PSI, and state transitions. This Carica papaya (Papaya) protein is Cytochrome f.